A 959-amino-acid polypeptide reads, in one-letter code: Glutamate receptor 3.4 (959 aa).

A signal peptide spans 1–35 (MGFLVMIREVSMAKAIRVVLLCVSVLWVVPKECAC). Residues 36-613 (RSNFSRNSSS…SPWSFLKPFT (578 aa)) lie on the Extracellular side of the membrane. 9 N-linked (GlcNAc...) asparagine glycosylation sites follow: Asn-38, Asn-42, Asn-108, Asn-365, Asn-378, Asn-404, Asn-443, Asn-461, and Asn-576. Residues 614–634 (IEMWAVTGGFFLFVGAMVWIL) traverse the membrane as a helical segment. Residues 635 to 643 (EHRFNQEFR) lie on the Cytoplasmic side of the membrane. The chain crosses the membrane as a helical span at residues 644-664 (GPPRRQLITIFWFSFSTMFFS). Over 665–675 (HRENTVSSLGR) the chain is Cytoplasmic. The chain crosses the membrane as a helical span at residues 676–696 (FVLIIWLFVVLIINSSYTASL). The Extracellular portion of the chain corresponds to 697 to 857 (TSILTIRQLT…SEDSQLSLKS (161 aa)). The helical transmembrane segment at 858-878 (FWGLFLICGITCFMALTVFFW) threads the bilayer. Topologically, residues 879–959 (RVFWQYQRLL…TSQSQHGEIT (81 aa)) are cytoplasmic. Disordered stretches follow at residues 893–913 (DEER…SRAP) and 936–959 (KSSK…GEIT). Residues 943-959 (STQSAAGTSQSQHGEIT) are compositionally biased toward low complexity.

This sequence belongs to the glutamate-gated ion channel (TC 1.A.10.1) family. Forms a heteromeric channel with GLR3.2. In terms of tissue distribution, highly expressed in roots and at lower levels in leaves and siliques. Expressed in seedlings, cotyledons, roots (e.g. root hairs, epidermis and cortex cells), stems, leaves (e.g. vascular bundles and hydathodes), and siliques. Expressed in root phloem.

It is found in the cell membrane. It localises to the plastid. The protein resides in the chloroplast membrane. Functionally, glutamate-gated receptor that probably acts as a non-selective cation channel, at least in hypocotyls. Can be triggered by Asn, Ser, Gly and, to a lower extent, Ala, Cys and Glu. May be involved in light-signal transduction and calcium homeostasis via the regulation of calcium influx into cells. Plays an important role in the calcium-based fast transmission of environmental stress. Acts as a negative regulator of lateral root initiation and development. May restrict primordia numbers and position along the root axis by a signaling process originating in the phloem. AtGLR3.4-mediated cytosolic calcium influx may be involved in the regulation of seed germination under salt stress by modulating sodium accumulation through the SOS pathway. This is Glutamate receptor 3.4 from Arabidopsis thaliana (Mouse-ear cress).